The chain runs to 291 residues: T-cell leukemia homeobox protein 3 (291 aa).

Residues Met-1–Tyr-56 are disordered. The segment at residues Arg-166–Thr-225 is a DNA-binding region (homeobox).

The protein localises to the nucleus. In Homo sapiens (Human), this protein is T-cell leukemia homeobox protein 3 (TLX3).